Reading from the N-terminus, the 428-residue chain is C4-dicarboxylate transport protein (428 aa).

Helical transmembrane passes span 8 to 28, 44 to 64, 76 to 96, 142 to 162, 184 to 204, 222 to 242, 326 to 346, and 352 to 372; these read SLYFQVLTAIAIGILLGHFYP, LIKMIIAPVIFCTVVTGIAGM, VALLYFEIVSTIALIIGLIIV, IGAFASGNILQVLLFAVLFGF, VIFGIINMIMRLAPIGAFGAM, LIICFYITCILFVVLVLGSIA, IVHQITLLIVLLLSSKGAAGV, and IVLAATLSAVGHLPVAGLALI.

Belongs to the dicarboxylate/amino acid:cation symporter (DAACS) (TC 2.A.23) family.

The protein localises to the cell inner membrane. Its function is as follows. Responsible for the transport of dicarboxylates such as succinate, fumarate, and malate from the periplasm across the membrane. This chain is C4-dicarboxylate transport protein, found in Escherichia coli O139:H28 (strain E24377A / ETEC).